Consider the following 634-residue polypeptide: UPF0313 protein PG_0934 (634 aa).

In terms of domain architecture, Radical SAM core spans 302 to 582 (AYEMIKHSVN…RQHMFFFWYK (281 aa)). Cysteine 316, cysteine 320, and cysteine 323 together coordinate [4Fe-4S] cluster. A disordered region spans residues 607–634 (DRTTSSRNDRHTPPSTQPRKSKSKSRHS). Residues 625 to 634 (RKSKSKSRHS) show a composition bias toward basic residues.

It belongs to the UPF0313 family. The cofactor is [4Fe-4S] cluster.

In Porphyromonas gingivalis (strain ATCC BAA-308 / W83), this protein is UPF0313 protein PG_0934.